The following is a 691-amino-acid chain: DNA ligase (691 aa).

The interval 1–22 (MTTAEDVAGNPYISDPRTDFES) is disordered. Residues 59–63 (DRAYD), 107–108 (SI), and Glu137 each bind NAD(+). Lys139 serves as the catalytic N6-AMP-lysine intermediate. 4 residues coordinate NAD(+): Arg160, Glu196, Lys311, and Lys335. Zn(2+)-binding residues include Cys426, Cys429, Cys442, and Cys448. The region spanning 608 to 691 (TDGDALDGQT…EELLDDAGVL (84 aa)) is the BRCT domain. A disordered region spans residues 637-667 (ERNDGSATSSVSGNTDYLVLGDNPGQRKQDD). The span at 641–651 (GSATSSVSGNT) shows a compositional bias: polar residues.

It belongs to the NAD-dependent DNA ligase family. LigA subfamily. Mg(2+) serves as cofactor. It depends on Mn(2+) as a cofactor.

It catalyses the reaction NAD(+) + (deoxyribonucleotide)n-3'-hydroxyl + 5'-phospho-(deoxyribonucleotide)m = (deoxyribonucleotide)n+m + AMP + beta-nicotinamide D-nucleotide.. Functionally, DNA ligase that catalyzes the formation of phosphodiester linkages between 5'-phosphoryl and 3'-hydroxyl groups in double-stranded DNA using NAD as a coenzyme and as the energy source for the reaction. It is essential for DNA replication and repair of damaged DNA. The sequence is that of DNA ligase from Haloarcula marismortui (strain ATCC 43049 / DSM 3752 / JCM 8966 / VKM B-1809) (Halobacterium marismortui).